A 436-amino-acid chain; its full sequence is Prenyltransferase nscD (436 aa).

The protein belongs to the tryptophan dimethylallyltransferase family.

Its pathway is secondary metabolite biosynthesis. Prenyltransferase; part of the gene cluster that mediates the biosynthesis of neosartoricin B, a prenylated anthracenone that probably exhibits T-cell antiproliferative activity, suggestive of a physiological role as an immunosuppressive agent. The non-reducing polyketide synthase nscA probably synthesizes and cyclizes the decaketide backbone. The hydrolase nscB then mediates the product release through hydrolysis followed by spontaneous decarboxylation. The prenyltransferase nscD catalyzes the addition of the dimethylallyl group to the aromatic C5. The FAD-dependent monooxygenase nscC is then responsible for the stereospecific hydroxylation at C2. Neosartoricin B can be converted into two additional compounds neosartoricins C and D. Neosartoricin C is a spirocyclic compound that is cyclized through the attack of C3 hydroxyl on C14, followed by dehydration. On the other hand, neosartoricin D is a further cyclized compound in which attack of C2 on C14 in neosartoricin C results in the formation of the acetal-containing dioxabicyclo-octanone ring. Both of these compounds are novel and possibly represent related metabolites of the gene cluster. The sequence is that of Prenyltransferase nscD from Arthroderma otae (strain ATCC MYA-4605 / CBS 113480) (Microsporum canis).